Here is a 350-residue protein sequence, read N- to C-terminus: 3-methylornithine synthase (350 aa).

The region spanning 57 to 279 (NRVFLNCFIY…PKCLIPASLD (223 aa)) is the Radical SAM core domain. Cys-71 and Cys-75 together coordinate [4Fe-4S] cluster. S-adenosyl-L-methionine is bound at residue Phe-77. Position 78 (Cys-78) interacts with [4Fe-4S] cluster. (3R)-3-methyl-D-ornithine-binding residues include Asp-112, Ser-146, and Tyr-169. 3 residues coordinate S-adenosyl-L-methionine: Glu-171, Arg-182, and Arg-190. A (3R)-3-methyl-D-ornithine-binding site is contributed by Arg-235. S-adenosyl-L-methionine is bound by residues Leu-240 and Gln-242. Ser-277, Thr-298, and Ser-299 together coordinate (3R)-3-methyl-D-ornithine.

The protein belongs to the radical SAM superfamily. PylB family. Requires [4Fe-4S] cluster as cofactor. The cofactor is S-adenosyl-L-methionine.

The catalysed reaction is L-lysine = (3R)-3-methyl-D-ornithine. The protein operates within amino-acid biosynthesis; L-pyrrolysine biosynthesis. Its function is as follows. Catalyzes the isomerization of L-lysine to (3R)-3-methyl-D-ornithine via a radical-based mechanism. Is required for the biosynthesis of pyrrolysine. The chain is 3-methylornithine synthase (pylB) from Methanosarcina acetivorans (strain ATCC 35395 / DSM 2834 / JCM 12185 / C2A).